A 133-amino-acid chain; its full sequence is Small ribosomal subunit protein uS8 (133 aa).

This sequence belongs to the universal ribosomal protein uS8 family. As to quaternary structure, part of the 30S ribosomal subunit. Contacts proteins S5 and S12.

One of the primary rRNA binding proteins, it binds directly to 16S rRNA central domain where it helps coordinate assembly of the platform of the 30S subunit. This chain is Small ribosomal subunit protein uS8, found in Crocosphaera subtropica (strain ATCC 51142 / BH68) (Cyanothece sp. (strain ATCC 51142)).